A 271-amino-acid chain; its full sequence is DNA repair protein RecO (271 aa).

Belongs to the RecO family.

Involved in DNA repair and RecF pathway recombination. This chain is DNA repair protein RecO, found in Rhodococcus erythropolis (strain PR4 / NBRC 100887).